The following is a 364-amino-acid chain: Methylthioribose-1-phosphate isomerase (364 aa).

Catalysis depends on aspartate 254, which acts as the Proton donor.

Belongs to the eIF-2B alpha/beta/delta subunits family. MtnA subfamily.

Its subcellular location is the cytoplasm. The protein resides in the nucleus. The enzyme catalyses 5-(methylsulfanyl)-alpha-D-ribose 1-phosphate = 5-(methylsulfanyl)-D-ribulose 1-phosphate. It participates in amino-acid biosynthesis; L-methionine biosynthesis via salvage pathway; L-methionine from S-methyl-5-thio-alpha-D-ribose 1-phosphate: step 1/6. In terms of biological role, catalyzes the interconversion of methylthioribose-1-phosphate (MTR-1-P) into methylthioribulose-1-phosphate (MTRu-1-P). The polypeptide is Methylthioribose-1-phosphate isomerase (Drosophila simulans (Fruit fly)).